Reading from the N-terminus, the 216-residue chain is Phosphatidylserine decarboxylase proenzyme (216 aa).

Ser-185 (schiff-base intermediate with substrate; via pyruvic acid) is an active-site residue. Ser-185 is modified (pyruvic acid (Ser); by autocatalysis).

The protein belongs to the phosphatidylserine decarboxylase family. PSD-A subfamily. As to quaternary structure, heterodimer of a large membrane-associated beta subunit and a small pyruvoyl-containing alpha subunit. Pyruvate serves as cofactor. In terms of processing, is synthesized initially as an inactive proenzyme. Formation of the active enzyme involves a self-maturation process in which the active site pyruvoyl group is generated from an internal serine residue via an autocatalytic post-translational modification. Two non-identical subunits are generated from the proenzyme in this reaction, and the pyruvate is formed at the N-terminus of the alpha chain, which is derived from the carboxyl end of the proenzyme. The post-translation cleavage follows an unusual pathway, termed non-hydrolytic serinolysis, in which the side chain hydroxyl group of the serine supplies its oxygen atom to form the C-terminus of the beta chain, while the remainder of the serine residue undergoes an oxidative deamination to produce ammonia and the pyruvoyl prosthetic group on the alpha chain.

The protein localises to the cell membrane. It catalyses the reaction a 1,2-diacyl-sn-glycero-3-phospho-L-serine + H(+) = a 1,2-diacyl-sn-glycero-3-phosphoethanolamine + CO2. The protein operates within phospholipid metabolism; phosphatidylethanolamine biosynthesis; phosphatidylethanolamine from CDP-diacylglycerol: step 2/2. Functionally, catalyzes the formation of phosphatidylethanolamine (PtdEtn) from phosphatidylserine (PtdSer). The polypeptide is Phosphatidylserine decarboxylase proenzyme (Nitrosomonas eutropha (strain DSM 101675 / C91 / Nm57)).